A 206-amino-acid chain; its full sequence is Large ribosomal subunit protein uL4 (206 aa).

The segment at 48–97 is disordered; that stretch reads THAVKNRSLVSGGGKKPWKQKHTGRARQGSTRASQWVGGGKAMGPKPRDY. The span at 63–72 shows a compositional bias: basic residues; that stretch reads KPWKQKHTGR.

It belongs to the universal ribosomal protein uL4 family. In terms of assembly, part of the 50S ribosomal subunit.

Its function is as follows. One of the primary rRNA binding proteins, this protein initially binds near the 5'-end of the 23S rRNA. It is important during the early stages of 50S assembly. It makes multiple contacts with different domains of the 23S rRNA in the assembled 50S subunit and ribosome. Functionally, forms part of the polypeptide exit tunnel. The polypeptide is Large ribosomal subunit protein uL4 (Anaeromyxobacter dehalogenans (strain 2CP-1 / ATCC BAA-258)).